A 632-amino-acid polypeptide reads, in one-letter code: tRNA uridine 5-carboxymethylaminomethyl modification enzyme MnmG (632 aa).

13-18 (GGGHAG) lines the FAD pocket. 273 to 287 (GPRYCPSIEDKIHRF) is a binding site for NAD(+).

It belongs to the MnmG family. As to quaternary structure, homodimer. Heterotetramer of two MnmE and two MnmG subunits. The cofactor is FAD.

The protein localises to the cytoplasm. NAD-binding protein involved in the addition of a carboxymethylaminomethyl (cmnm) group at the wobble position (U34) of certain tRNAs, forming tRNA-cmnm(5)s(2)U34. The chain is tRNA uridine 5-carboxymethylaminomethyl modification enzyme MnmG from Psychrobacter arcticus (strain DSM 17307 / VKM B-2377 / 273-4).